The following is a 139-amino-acid chain: Large ribosomal subunit protein uL16 (139 aa).

Residues 1-11 (MLQPKRTKYRK) show a composition bias toward basic residues. Residues 1 to 30 (MLQPKRTKYRKPFLQSHDKRKAHKGNKVSF) are disordered.

Belongs to the universal ribosomal protein uL16 family. In terms of assembly, part of the 50S ribosomal subunit.

Binds 23S rRNA and is also seen to make contacts with the A and possibly P site tRNAs. The protein is Large ribosomal subunit protein uL16 of Mycoplasmopsis synoviae (strain 53) (Mycoplasma synoviae).